The primary structure comprises 333 residues: Electron transfer flavoprotein subunit alpha, mitochondrial (333 aa).

A mitochondrion-targeting transit peptide spans 1–19 (MFRAAAPGQLRRATSLLRF). The tract at residues 20–204 (QSTLVIAEHA…GISEWLDQKL (185 aa)) is domain I. An N6-acetyllysine; alternate modification is found at lysine 59. An N6-succinyllysine; alternate modification is found at lysine 59. Residue lysine 62 is modified to N6-acetyllysine. The residue at position 69 (lysine 69) is an N6-acetyllysine; alternate. Lysine 69 is modified (N6-succinyllysine; alternate). Lysine 75 is subject to N6-acetyllysine. At lysine 85 the chain carries N6-acetyllysine; alternate. Lysine 85 is modified (N6-succinyllysine; alternate). Threonine 93 is subject to Phosphothreonine. 2 positions are modified to N6-acetyllysine: lysine 101 and lysine 139. Phosphoserine is present on serine 140. Lysine 158 carries the post-translational modification N6-acetyllysine; alternate. Residue lysine 158 is modified to N6-succinyllysine; alternate. An N6-acetyllysine modification is found at lysine 164. Lysine 187 is subject to N6-succinyllysine. Lysine 203 bears the N6-acetyllysine; alternate mark. Lysine 203 carries the N6-succinyllysine; alternate modification. A domain II region spans residues 205–333 (TKSDRPELTG…PEMTELLKKK (129 aa)). Lysine 216 carries the post-translational modification N6-succinyllysine. Position 223 (arginine 223) interacts with FAD. Residues lysine 226 and lysine 232 each carry the N6-acetyllysine; alternate modification. N6-succinyllysine; alternate occurs at positions 226 and 232. Residues serine 248, 263 to 266 (VGQT), 281 to 286 (SGAIQH), and asparagine 300 contribute to the FAD site. The residue at position 301 (lysine 301) is an N6-succinyllysine. FAD is bound at residue 318–319 (DL).

The protein belongs to the ETF alpha-subunit/FixB family. Heterodimer composed of ETFA and ETFB. Identified in a complex that contains ETFA, ETFB and ETFRF1. Interaction with ETFRF1 promotes dissociation of the bound FAD and loss of electron transfer activity. Interacts with TASOR. Requires FAD as cofactor.

It is found in the mitochondrion matrix. Functionally, heterodimeric electron transfer flavoprotein that accepts electrons from several mitochondrial dehydrogenases, including acyl-CoA dehydrogenases, glutaryl-CoA and sarcosine dehydrogenase. It transfers the electrons to the main mitochondrial respiratory chain via ETF-ubiquinone oxidoreductase (ETF dehydrogenase). Required for normal mitochondrial fatty acid oxidation and normal amino acid metabolism. This is Electron transfer flavoprotein subunit alpha, mitochondrial (ETFA) from Bos taurus (Bovine).